The primary structure comprises 378 residues: Aminomethyltransferase (378 aa).

Belongs to the GcvT family. In terms of assembly, the glycine cleavage system is composed of four proteins: P, T, L and H.

It catalyses the reaction N(6)-[(R)-S(8)-aminomethyldihydrolipoyl]-L-lysyl-[protein] + (6S)-5,6,7,8-tetrahydrofolate = N(6)-[(R)-dihydrolipoyl]-L-lysyl-[protein] + (6R)-5,10-methylene-5,6,7,8-tetrahydrofolate + NH4(+). Functionally, the glycine cleavage system catalyzes the degradation of glycine. This chain is Aminomethyltransferase, found in Acidobacterium capsulatum (strain ATCC 51196 / DSM 11244 / BCRC 80197 / JCM 7670 / NBRC 15755 / NCIMB 13165 / 161).